The chain runs to 466 residues: Glutamate--tRNA ligase (466 aa).

The short motif at 11–21 (PSPTGFIHLGN) is the 'HIGH' region element. The 'KMSKS' region signature appears at 243–247 (KMSKR). Lys246 contacts ATP.

The protein belongs to the class-I aminoacyl-tRNA synthetase family. Glutamate--tRNA ligase type 1 subfamily. In terms of assembly, monomer.

It localises to the cytoplasm. It carries out the reaction tRNA(Glu) + L-glutamate + ATP = L-glutamyl-tRNA(Glu) + AMP + diphosphate. In terms of biological role, catalyzes the attachment of glutamate to tRNA(Glu) in a two-step reaction: glutamate is first activated by ATP to form Glu-AMP and then transferred to the acceptor end of tRNA(Glu). In Cupriavidus taiwanensis (strain DSM 17343 / BCRC 17206 / CCUG 44338 / CIP 107171 / LMG 19424 / R1) (Ralstonia taiwanensis (strain LMG 19424)), this protein is Glutamate--tRNA ligase.